Consider the following 274-residue polypeptide: Pantothenate synthetase (274 aa).

ATP is bound at residue 27-34; sequence MGALHQGH. Residue His-34 is the Proton donor of the active site. Gln-58 provides a ligand contact to (R)-pantoate. Gln-58 lines the beta-alanine pocket. 144 to 147 provides a ligand contact to ATP; that stretch reads GKKD. Gln-150 serves as a coordination point for (R)-pantoate. Residues Ile-173 and 181 to 184 contribute to the ATP site; that span reads LSSR.

Belongs to the pantothenate synthetase family. Homodimer.

The protein localises to the cytoplasm. The enzyme catalyses (R)-pantoate + beta-alanine + ATP = (R)-pantothenate + AMP + diphosphate + H(+). The protein operates within cofactor biosynthesis; (R)-pantothenate biosynthesis; (R)-pantothenate from (R)-pantoate and beta-alanine: step 1/1. Functionally, catalyzes the condensation of pantoate with beta-alanine in an ATP-dependent reaction via a pantoyl-adenylate intermediate. In Sulfurovum sp. (strain NBC37-1), this protein is Pantothenate synthetase.